The sequence spans 254 residues: Ribonuclease HII (254 aa).

An RNase H type-2 domain is found at 46–234 (KLIAGIDEVG…VWMASAPQEV (189 aa)). A divalent metal cation contacts are provided by aspartate 52, glutamate 53, and aspartate 144.

This sequence belongs to the RNase HII family. Mn(2+) is required as a cofactor. It depends on Mg(2+) as a cofactor.

It is found in the cytoplasm. The enzyme catalyses Endonucleolytic cleavage to 5'-phosphomonoester.. In terms of biological role, endonuclease that specifically degrades the RNA of RNA-DNA hybrids. The polypeptide is Ribonuclease HII (Koribacter versatilis (strain Ellin345)).